A 544-amino-acid chain; its full sequence is Esterase P (544 aa).

Residues 1-19 (MSIFKRLLCLTLLWIAALE) form the signal peptide. A glycan (N-linked (GlcNAc...) asparagine) is linked at asparagine 75. The cysteines at positions 83 and 102 are disulfide-linked. N-linked (GlcNAc...) asparagine glycosylation occurs at asparagine 114. Serine 206 functions as the Acyl-ester intermediate in the catalytic mechanism. Cysteine 258 and cysteine 270 are joined by a disulfide. Residues asparagine 262 and asparagine 456 are each glycosylated (N-linked (GlcNAc...) asparagine). Histidine 466 functions as the Charge relay system in the catalytic mechanism. Cysteines 514 and 535 form a disulfide.

Belongs to the type-B carboxylesterase/lipase family. In terms of assembly, monomer.

It localises to the secreted. The enzyme catalyses a carboxylic ester + H2O = an alcohol + a carboxylate + H(+). The sequence is that of Esterase P (Est-P) from Drosophila melanogaster (Fruit fly).